Here is a 377-residue protein sequence, read N- to C-terminus: Succinyl-diaminopimelate desuccinylase (377 aa).

Histidine 66 lines the Zn(2+) pocket. Aspartate 68 is a catalytic residue. A Zn(2+)-binding site is contributed by aspartate 99. The active-site Proton acceptor is glutamate 133. Zn(2+) contacts are provided by glutamate 134, glutamate 163, and histidine 349.

The protein belongs to the peptidase M20A family. DapE subfamily. As to quaternary structure, homodimer. Zn(2+) serves as cofactor. It depends on Co(2+) as a cofactor.

It catalyses the reaction N-succinyl-(2S,6S)-2,6-diaminopimelate + H2O = (2S,6S)-2,6-diaminopimelate + succinate. The protein operates within amino-acid biosynthesis; L-lysine biosynthesis via DAP pathway; LL-2,6-diaminopimelate from (S)-tetrahydrodipicolinate (succinylase route): step 3/3. In terms of biological role, catalyzes the hydrolysis of N-succinyl-L,L-diaminopimelic acid (SDAP), forming succinate and LL-2,6-diaminopimelate (DAP), an intermediate involved in the bacterial biosynthesis of lysine and meso-diaminopimelic acid, an essential component of bacterial cell walls. In Legionella pneumophila (strain Lens), this protein is Succinyl-diaminopimelate desuccinylase.